A 440-amino-acid chain; its full sequence is Glycerol-3-phosphate dehydrogenase [NAD(+)] 2, mitochondrial (440 aa).

The N-terminal 16 residues, 1–16 (MLAVRRLTRYTFLKRT), are a transit peptide targeting the mitochondrion. 3 positions are modified to phosphoserine: Ser70, Ser72, and Ser75. Residues 90 to 95 (GSGNWG), Phe122, and Phe178 contribute to the NAD(+) site. Residue Lys201 coordinates substrate. Ala234 is a binding site for NAD(+). The active-site Proton acceptor is Lys294. NAD(+)-binding residues include Arg359 and Gln388. Residue 359 to 360 (RN) coordinates substrate.

This sequence belongs to the NAD-dependent glycerol-3-phosphate dehydrogenase family.

It is found in the cytoplasm. It localises to the mitochondrion. It carries out the reaction sn-glycerol 3-phosphate + NAD(+) = dihydroxyacetone phosphate + NADH + H(+). Functionally, catalyzes the production of glycerol under anaerobic growth conditions. Glycerol production serves as a redox sink by consuming the excess cytosolic NADH during anaerobic metabolism. This chain is Glycerol-3-phosphate dehydrogenase [NAD(+)] 2, mitochondrial, found in Saccharomyces cerevisiae (strain ATCC 204508 / S288c) (Baker's yeast).